The sequence spans 373 residues: D-alanine--D-alanine ligase (373 aa).

The region spanning 156–363 is the ATP-grasp domain; sequence KKLWSAAGLP…YPTLLATMVE (208 aa). Residue 184-239 participates in ATP binding; the sequence is LQRLGLPAYVKPARGGSSIGVSRVSSFDELPAAIAAARRHDPKVIVEAAINGRELE. Mg(2+) contacts are provided by Asp318, Glu330, and Asn332.

Belongs to the D-alanine--D-alanine ligase family. It depends on Mg(2+) as a cofactor. Mn(2+) is required as a cofactor.

It is found in the cytoplasm. It carries out the reaction 2 D-alanine + ATP = D-alanyl-D-alanine + ADP + phosphate + H(+). The protein operates within cell wall biogenesis; peptidoglycan biosynthesis. In terms of biological role, cell wall formation. The chain is D-alanine--D-alanine ligase from Mycobacterium ulcerans (strain Agy99).